Reading from the N-terminus, the 172-residue chain is Putative B3 domain-containing protein At1g05615 (172 aa).

The segment at residues 69-169 is a DNA-binding region (TF-B3); that stretch reads VDEGKIIDFE…NLAMVPLTPT (101 aa).

It localises to the nucleus. This Arabidopsis thaliana (Mouse-ear cress) protein is Putative B3 domain-containing protein At1g05615.